Consider the following 164-residue polypeptide: C-type natriuretic peptide (164 aa).

A signal peptide spans 1–23 (MVASRLAAGGLLLLALLALALDG). 2 disordered regions span residues 24 to 93 (KPAP…AAAA) and 115 to 134 (HPEH…GASR). Residues 24-142 (KPAPPQPLRK…SRRLKGVAKK (119 aa)) constitute a propeptide that is removed on maturation. A compositionally biased stretch (gly residues) spans 58-67 (AGGGGGGGRS). The span at 68–93 (GSKAANAAPTAPKSKGGAAAAAAAAA) shows a compositional bias: low complexity. Residues 121 to 132 (GGGGGGGGGGGA) show a composition bias toward gly residues. Cysteine 148 and cysteine 164 are joined by a disulfide.

Belongs to the natriuretic peptide family. In terms of tissue distribution, expressed by the venom gland.

The protein localises to the secreted. Functionally, snake venom natriuretic peptide that has a vasorelaxant activity in rat aortic strips and a diuretic potency in anesthetized rats. May act by activating natriuretic receptors (NPR1 and/or NPR2). This Philodryas olfersii (Green snake) protein is C-type natriuretic peptide.